A 200-amino-acid polypeptide reads, in one-letter code: Large ribosomal subunit protein bL25 (200 aa).

This sequence belongs to the bacterial ribosomal protein bL25 family. CTC subfamily. Part of the 50S ribosomal subunit; part of the 5S rRNA/L5/L18/L25 subcomplex. Contacts the 5S rRNA. Binds to the 5S rRNA independently of L5 and L18.

Its function is as follows. This is one of the proteins that binds to the 5S RNA in the ribosome where it forms part of the central protuberance. The chain is Large ribosomal subunit protein bL25 from Nocardia farcinica (strain IFM 10152).